The chain runs to 293 residues: Ribosomal RNA small subunit methyltransferase H (293 aa).

Residues 32-34 (GGH), D51, F78, D99, and Q106 each bind S-adenosyl-L-methionine. A disordered region spans residues 272–293 (SDEEIKENPASRSAKLRVGRRI).

Belongs to the methyltransferase superfamily. RsmH family.

It is found in the cytoplasm. The catalysed reaction is cytidine(1402) in 16S rRNA + S-adenosyl-L-methionine = N(4)-methylcytidine(1402) in 16S rRNA + S-adenosyl-L-homocysteine + H(+). Its function is as follows. Specifically methylates the N4 position of cytidine in position 1402 (C1402) of 16S rRNA. The chain is Ribosomal RNA small subunit methyltransferase H from Sulfurihydrogenibium sp. (strain YO3AOP1).